We begin with the raw amino-acid sequence, 63 residues long: Large ribosomal subunit protein bL28 (63 aa).

Belongs to the bacterial ribosomal protein bL28 family.

The protein is Large ribosomal subunit protein bL28 of Treponema denticola (strain ATCC 35405 / DSM 14222 / CIP 103919 / JCM 8153 / KCTC 15104).